The chain runs to 179 residues: Large ribosomal subunit protein uL6 (179 aa).

This sequence belongs to the universal ribosomal protein uL6 family. Part of the 50S ribosomal subunit.

Functionally, this protein binds to the 23S rRNA, and is important in its secondary structure. It is located near the subunit interface in the base of the L7/L12 stalk, and near the tRNA binding site of the peptidyltransferase center. The sequence is that of Large ribosomal subunit protein uL6 from Mycoplasmopsis pulmonis (strain UAB CTIP) (Mycoplasma pulmonis).